The following is a 408-amino-acid chain: L-lactate oxidase (408 aa).

An FMN hydroxy acid dehydrogenase domain is found at 14-370; the sequence is NEAIKMVNVD…KHADIRQINY (357 aa). A pyruvate-binding site is contributed by Y40. Residues 93-95, S122, and Q144 contribute to the FMN site; that span reads PIA. Y146 contacts pyruvate. Residue T172 coordinates FMN. A pyruvate-binding site is contributed by R181. 2 residues coordinate FMN: K241 and S263. Residues H265 and R268 each coordinate pyruvate. The Proton acceptor role is filled by H265. FMN is bound by residues 296–300 and R320; that span reads DSGVR.

The protein belongs to the FMN-dependent alpha-hydroxy acid dehydrogenase family. In terms of assembly, homotetramer. FMN serves as cofactor.

It catalyses the reaction a (2S)-2-hydroxycarboxylate + O2 = a 2-oxocarboxylate + H2O2. The catalysed reaction is (S)-lactate + O2 = pyruvate + H2O2. The enzyme catalyses 2-hydroxyoctanoate + O2 = 2-oxooctanoate + H2O2. It carries out the reaction glycolate + O2 = glyoxylate + H2O2. It catalyses the reaction mandelate + O2 = phenylglyoxylate + H2O2. The catalysed reaction is 2-hydroxyoctadecanoate + O2 = 2-oxooctadecanoate + H2O2. In terms of biological role, oxidase that catalyzes the oxidation of a broad range of 2-hydroxyacids in vitro, such as (S)-lactate, 2-hydroxyoctanoate, and to a lesser extent glycolate, mandelate and 2-hydroxyoctadecanoate, to the corresponding 2-oxoacids, with a reduction of O2 to H2O2. May be involved in the utilization of L-lactate as an energy source for growth. The protein is L-lactate oxidase of Lactobacillus jensenii.